The sequence spans 747 residues: Heterogeneous nuclear ribonucleoprotein U-like protein 2 (747 aa).

One can recognise an SAP domain in the interval 3–37 (VKRLKVTELRSELQRRGLDSRGLKVDLAQRLQEAL). Disordered stretches follow at residues 40 to 242 (EMLE…EEED) and 627 to 666 (EEAR…GQRR). Acidic residues predominate over residues 73-97 (GDEEEDEEEEEEDEEALLEDEDEEP). A compositionally biased stretch (low complexity) spans 115–125 (EAAAMEAAAEP). A compositionally biased stretch (gly residues) spans 137–147 (GSGGVNGGEEQ). Basic and acidic residues predominate over residues 148-163 (GLGKREEDEPEERSGD). The residue at position 161 (Ser-161) is a Phosphoserine. Thr-165 carries the post-translational modification Phosphothreonine. Phosphoserine is present on residues Ser-168, Ser-185, Ser-188, Ser-226, and Ser-228. Residues 185–223 (SEKSKPAGSDGERRGVKRQRDEKDEHGRAYYEFREEAYH) show a composition bias toward basic and acidic residues. Residues 226–419 (SKSPLPPEEE…VELNFGQKEE (194 aa)) form the B30.2/SPRY domain. Over residues 232-242 (PEEEAKDEEED) the composition is skewed to acidic residues. Residues 627–639 (EEARKLLPPSEKR) are compositionally biased toward basic and acidic residues. Positions 640–654 (TNRRNNRNKRNRQNR) are enriched in basic residues. An omega-N-methylarginine mark is found at Arg-656, Arg-684, Arg-738, and Arg-747.

Binds to MLF1 and retains it in the nucleus.

It localises to the nucleus. This is Heterogeneous nuclear ribonucleoprotein U-like protein 2 (HNRNPUL2) from Homo sapiens (Human).